The primary structure comprises 163 residues: Thiol peroxidase (163 aa).

Residues 16-162 (LQVGDKALDF…FEAAIAAAKA (147 aa)) form the Thioredoxin domain. The active-site Cysteine sulfenic acid (-SOH) intermediate is C58. Cysteines 58 and 92 form a disulfide.

It belongs to the peroxiredoxin family. Tpx subfamily. In terms of assembly, homodimer.

It carries out the reaction a hydroperoxide + [thioredoxin]-dithiol = an alcohol + [thioredoxin]-disulfide + H2O. Functionally, thiol-specific peroxidase that catalyzes the reduction of hydrogen peroxide and organic hydroperoxides to water and alcohols, respectively. Plays a role in cell protection against oxidative stress by detoxifying peroxides. This is Thiol peroxidase from Streptococcus pneumoniae serotype 2 (strain D39 / NCTC 7466).